Here is a 194-residue protein sequence, read N- to C-terminus: Molybdenum cofactor guanylyltransferase (194 aa).

GTP is bound by residues 12–14 (LAG), lysine 25, asparagine 53, aspartate 70, and aspartate 100. Aspartate 100 lines the Mg(2+) pocket.

This sequence belongs to the MobA family. In terms of assembly, monomer. It depends on Mg(2+) as a cofactor.

It is found in the cytoplasm. The catalysed reaction is Mo-molybdopterin + GTP + H(+) = Mo-molybdopterin guanine dinucleotide + diphosphate. Its function is as follows. Transfers a GMP moiety from GTP to Mo-molybdopterin (Mo-MPT) cofactor (Moco or molybdenum cofactor) to form Mo-molybdopterin guanine dinucleotide (Mo-MGD) cofactor. The polypeptide is Molybdenum cofactor guanylyltransferase (Vibrio atlanticus (strain LGP32) (Vibrio splendidus (strain Mel32))).